A 567-amino-acid chain; its full sequence is MSNISRQAYADMFGPTVGDKVRLADTELWIEVEDDLTTYGEEVKFGGGKVIRDGMGQGQMLAADCVDLVLTNALIVDHWGIVKADIGVKDGRIFAIGKAGNPDIQPNVTIPIGAATEVIAAEGKIVTAGGIDTHIHWICPQQAEEALVSGVTTMVGGGTGPAAGTHATTCTPGPWYISRMLQAADSLPVNIGLLGKGNVSQPDALREQVAAGVIGLKIHEDWGATPAAIDCALTVADEMDIQVALHSDTLNESGFVEDTLAAIGGRTIHTFHTEGAGGGHAPDIITACAHPNILPSSTNPTLPYTLNTIDEHLDMLMVCHHLDPDIAEDVAFAESRIRRETIAAEDVLHDLGAFSLTSSDSQAMGRVGEVVLRTWQVAHRMKVQRGALAEETGDNDNFRVKRYIAKYTINPALTHGIAHEVGSIEVGKLADLVVWSPAFFGVKPATVIKGGMIAIAPMGDINASIPTPQPVHYRPMFGALGSARHHCRLTFLSQAAADNGVAERLNLRSAIAVVKGCRTVQKADMVHNSLQPNITVDTQTYEVRVDGELITSEPADVLPMAQRYFLF.

Positions 129–567 (GGIDTHIHWI…LPMAQRYFLF (439 aa)) constitute a Urease domain. Positions 134, 136, and 217 each coordinate Ni(2+). Lys217 carries the post-translational modification N6-carboxylysine. His219 serves as a coordination point for substrate. His246 and His272 together coordinate Ni(2+). His320 functions as the Proton donor in the catalytic mechanism. Asp360 serves as a coordination point for Ni(2+).

The protein belongs to the metallo-dependent hydrolases superfamily. Urease alpha subunit family. Heterotrimer of UreA (gamma), UreB (beta) and UreC (alpha) subunits. Three heterotrimers associate to form the active enzyme. Requires Ni cation as cofactor. In terms of processing, carboxylation allows a single lysine to coordinate two nickel ions.

It is found in the cytoplasm. The catalysed reaction is urea + 2 H2O + H(+) = hydrogencarbonate + 2 NH4(+). Its pathway is nitrogen metabolism; urea degradation; CO(2) and NH(3) from urea (urease route): step 1/1. The protein is Urease subunit alpha of Klebsiella pneumoniae (strain 342).